The following is a 1701-amino-acid chain: MKIIFFLCSFLFFIINTQCVTHESYQELVKKLEALEDAVLTGYSLFQKEKMVLNEGTSGTAVTTSTPGSSGSVTSGGSVASVASVASGGSGGSVASGGSGNSRRTNPSDNSSDSNTKTYADLKHRVQNYLFTIKELKYPELFDLTNHMLTLSKNVDGFKYLIDGYEEINELLYKLNFYYDLLRAKLNDACANSYCQIPFNLKIRANELDVLKKIVFGYRKPLDNIKDNVGKMEDYIKKNKTTIANINELIEGSKKTIDQNKNADNEEGKKKLYQAQYNLFIYNKQLQEAHNLISVLEKRIDTLKKNENIKKLLEDIDKIKTDAENPTTGSKPNPLPENKKKEVEGHEEKIKEIAKTIKFNIDSLFTDPLELEYYLREKNKKVDVTPKSQDPTKSVQIPKVPYPNGIVYPLPLTDIHNSLAADNDKNSYGDLMNPDTKEKINEKIITDNKERKIFINNIKKQIDLEEKNINHTKEQNKKLLEDYEKSKKDYEELLEKFYEMKFNNNFDKDVVDKIFSARYTYNVEKQRYNNKFSSSNNSVYNVQKLKKALSYLEDYSLRKGISEKDFNHYYTLKTGLEADIKKLTEEIKSSENKILEKNFKGLTHSANASLEVSDIVKLQVQKVLLIKKIEDLRKIELFLKNAQLKDSIHVPNIYKPQNKPEPYYLIVLKKEVDKLKEFIPKVKDMLKKEQAVLSSITQPLVAASETTEDGGHSTHTLSQSGETEVTEETEVTEETVGHTTTVTITLPPKEESAPKEVKVVENSIEHKSNDNSQALTKTVYLKKLDEFLTKSYICHKYILVSNSSMDQKLLEVYNLTPEEENELKSCDPLDLLFNIQNNIPAMYSLYDSMNNDLQHLFFELYQKEMIYYLHKLKEENHIKKLLEEQKQITGTSSTSSPGNTTVNTAQSATHSNSQNQQSNASSTNTQNGVAVSSGPAVVEESHDPLTVLSISNDLKGIVSLLNLGNKTKVPNPLTISTTEMEKFYENILKNNDTYFNDDIKQFVKSNSKVITGLTETQKNALNDEIKKLKDTLQLSFDLYNKYKLKLDRLFNKKKELGQDKMQIKKLTLLKEQLESKLNSLNNPHNVLQNFSVFFNKKKEAEIAETENTLENTKILLKHYKGLVKYYNGESSPLKTLSEVSIQTEDNYANLEKFRALSKIDGKLNDNLHLGKKKLSFLSSGLHHLITELKEVIKNKNYTGNSPSENNKKVNEALKSYENFLPEAKVTTVVTPPQPDVTPSPLSVRVSGSSGSTKEETQIPTSGSLLTELQQVVQLQNYDEEDDSLVVLPIFGESEDNDEYLDQVVTGEAISVTMDNILSGFENEYDVIYLKPLAGVYRSLKKQIEKNIITFNLNLNDILNSRLKKRKYFLDVLESDLMQFKHISSNEYIIEDSFKLLNSEQKNTLLKSYKYIKESVENDIKFAQEGISYYEKVLAKYKDDLESIKKVIKEEKEKFPSSPPTTPPSPAKTDEQKKESKFLPFLTNIETLYNNLVNKIDDYLINLKAKINDCNVEKDEAHVKITKLSDLKAIDDKIDLFKNTNDFEAIKKLINDDTKKDMLGKLLSTGLVQNFPNTIISKLIEGKFQDMLNISQHQCVKKQCPENSGCFRHLDEREECKCLLNYKQEGDKCVENPNPTCNENNGGCDADATCTEEDSGSSRKKITCECTKPDSYPLFDGIFCSSSNFLGISFLLILMLILYSFI.

A signal peptide spans 1 to 19 (MKIIFFLCSFLFFIINTQC). Positions 89–100 (GSGGSVASGGSG) are enriched in gly residues. The interval 89-118 (GSGGSVASGGSGNSRRTNPSDNSSDSNTKT) is disordered. Low complexity predominate over residues 101 to 116 (NSRRTNPSDNSSDSNT). 2 N-linked (GlcNAc...) asparagine glycosylation sites follow: asparagine 110 and asparagine 239. Residues 322 to 344 (DAENPTTGSKPNPLPENKKKEVE) form a disordered region. 3 N-linked (GlcNAc...) asparagine glycosylation sites follow: asparagine 470, asparagine 536, and asparagine 607. A disordered region spans residues 704–739 (SETTEDGGHSTHTLSQSGETEVTEETEVTEETVGHT). Acidic residues predominate over residues 724 to 733 (EVTEETEVTE). 7 N-linked (GlcNAc...) asparagine glycosylation sites follow: asparagine 802, asparagine 899, asparagine 919, asparagine 965, asparagine 991, asparagine 1089, and asparagine 1196. Residues 889 to 927 (TGTSSTSSPGNTTVNTAQSATHSNSQNQQSNASSTNTQN) are compositionally biased toward low complexity. Positions 889–936 (TGTSSTSSPGNTTVNTAQSATHSNSQNQQSNASSTNTQNGVAVSSGPA) are disordered. Disordered regions lie at residues 1230-1259 (TPPQ…TQIP) and 1451-1472 (KEKF…DEQK). Positions 1245 to 1259 (VSGSSGSTKEETQIP) are enriched in polar residues. A compositionally biased stretch (pro residues) spans 1456 to 1465 (SSPPTTPPSP). N-linked (GlcNAc...) asparagine glycosylation is present at asparagine 1588. EGF-like domains are found at residues 1592–1632 (HQCV…VENP) and 1633–1680 (NPTC…IFCS). 6 cysteine pairs are disulfide-bonded: cysteine 1594–cysteine 1605, cysteine 1599–cysteine 1615, cysteine 1617–cysteine 1628, cysteine 1636–cysteine 1649, cysteine 1643–cysteine 1663, and cysteine 1665–cysteine 1679. The GPI-anchor amidated serine moiety is linked to residue serine 1680. A propeptide spans 1681–1701 (SSNFLGISFLLILMLILYSFI) (removed in mature form).

In terms of assembly, forms a complex composed of subunits p83, p30, p38, and p42 which remain non-covalently associated; the complex is formed at the merozoite surface prior to egress from host erythrocytes. Forms a complex composed of processed MSP1 subunits, MSP6 subunit p36 and MSP7; the complex is formed at the merozoite surface prior to egress from host erythrocytes. Within the complex, interacts (via subunit p38) with MSP6 subunit p36 and (via subunits p83, p30 and p38) with MSP7 (via subunit p22). Forms a complex composed of MSP1, MSP6, DBLMSP1 and DBLMSP2. Within the complex, interacts (via subunit p38) with DBLMSP1 and DBLMSP2. Forms a complex composed of MSP1, and rhoptry proteins RhopH3, RAP1 and CLAG9/RhopH3. Within the complex, interacts (via subunits p42 and p19) with RhopH3 (via C-terminus). Forms a complex composed of MSP1, MSP6, MSP7, MSP9 and MSP3; within the complex, MSP6 and MSP9 mediate the binding to the host erythrocyte. Interacts (via subunits p19 and p42) with MSP9; the interaction is direct; MSP1 subunits p19 or p42, and MSP9 form a co-ligand complex that interacts with host SLC4A1/Band 3 protein. May interact with PFD6. Interacts with host spectrin. Interacts with host glycophorin GYPA in a sialic acid-independent manner. As to quaternary structure, interacts with host proinflammatory cytokine S100P; the interaction blocks S100P inflammatory and chemotactic activities. In terms of assembly, interacts with host SLC4A1/Band 3 (via 5ABC region) on the host erythrocyte surface in a sialic acid-independent manner. Post-translationally, the p190 precursor is cleaved by SUB1 prior to merozoite egress into 4 subunits p83, p30, p38, and p42 which remain non-covalently associated. SUB1-mediated proteolytic cleavage occurs in an orderly manner; the first cleavage occurs at the p30/p38 site, followed by cleavage at the p83/p30 site, the last cleavage occurs at the p38/p42 site. The order of cleavage is essential for parasite viability. SUB1-mediated processing is essential for merozoite egress. In a second processing step during erythrocyte invasion, p42 is cleaved by SUB2 into p33 and p19; the latter remains attached to the merozoite surface via its GPI-anchor and is endocytosed during the subsequent ring stage.

The protein localises to the cell membrane. The protein resides in the secreted. Its subcellular location is the vacuole membrane. Its function is as follows. During the asexual blood stage, involved in merozoite egress from host erythrocytes possibly via its interaction with the host cytoskeleton protein spectrin resulting in the destabilization of the host cytoskeleton and thus leading to erythrocyte cell membrane rupture. Involved in the binding to host erythrocytes and is required for host erythrocyte invasion. By binding to host proinflammatory cytokine S100P may interfere with host immune responses. Functionally, involved in merozoite invasion of host erythrocytes. May play a role in the biogenesis and/or function of the food vacuole during the intraerythrocytic development. This chain is Merozoite surface protein 1, found in Plasmodium falciparum (isolate mad20 / Papua New Guinea).